The primary structure comprises 663 residues: Protein KINESIN LIGHT CHAIN-RELATED 2 (663 aa).

Over residues 1 to 14 (MDVGESNERVKDDS) the composition is skewed to basic and acidic residues. 2 disordered regions span residues 1–24 (MDVG…RSPL) and 86–146 (GESK…KVSV). S19 is subject to Phosphoserine. A compositionally biased stretch (basic and acidic residues) spans 86–100 (GESKKEIILEKKEES). Over residues 102 to 111 (GEGSLSQKKP) the composition is skewed to polar residues. 11 TPR repeats span residues 147–181 (DEES…ALRA), 200–233 (VMSL…PMIE), 243–276 (FAGC…QRQV), 285–318 (GETC…HKEN), 329–363 (AADR…SSQN), 369–402 (AAVD…FKQG), 411–444 (ALVY…YLKP), 454–487 (ATGF…YANA), 495–528 (AGIE…FRNS), 537–570 (GIAL…LEKE), and 579–612 (LAVY…REEK).

Belongs to the kinesin light chain family.

The protein is Protein KINESIN LIGHT CHAIN-RELATED 2 of Arabidopsis thaliana (Mouse-ear cress).